A 650-amino-acid chain; its full sequence is DNA gyrase subunit B (650 aa).

A Toprim domain is found at 429–543; that stretch reads NELFIVEGDS…AGYVYIAQPP (115 aa). Mg(2+) contacts are provided by glutamate 435, aspartate 508, and aspartate 510.

This sequence belongs to the type II topoisomerase GyrB family. Heterotetramer, composed of two GyrA and two GyrB chains. In the heterotetramer, GyrA contains the active site tyrosine that forms a transient covalent intermediate with DNA, while GyrB binds cofactors and catalyzes ATP hydrolysis. Requires Mg(2+) as cofactor. It depends on Mn(2+) as a cofactor. Ca(2+) serves as cofactor.

Its subcellular location is the cytoplasm. The enzyme catalyses ATP-dependent breakage, passage and rejoining of double-stranded DNA.. In terms of biological role, a type II topoisomerase that negatively supercoils closed circular double-stranded (ds) DNA in an ATP-dependent manner to modulate DNA topology and maintain chromosomes in an underwound state. Negative supercoiling favors strand separation, and DNA replication, transcription, recombination and repair, all of which involve strand separation. Also able to catalyze the interconversion of other topological isomers of dsDNA rings, including catenanes and knotted rings. Type II topoisomerases break and join 2 DNA strands simultaneously in an ATP-dependent manner. This chain is DNA gyrase subunit B, found in Streptococcus pyogenes serotype M18 (strain MGAS8232).